We begin with the raw amino-acid sequence, 278 residues long: Elongation factor Ts (278 aa).

The tract at residues 82–85 (TDFV) is involved in Mg(2+) ion dislocation from EF-Tu.

Belongs to the EF-Ts family.

It is found in the cytoplasm. Its function is as follows. Associates with the EF-Tu.GDP complex and induces the exchange of GDP to GTP. It remains bound to the aminoacyl-tRNA.EF-Tu.GTP complex up to the GTP hydrolysis stage on the ribosome. This Streptomyces ramocissimus protein is Elongation factor Ts (tsf).